Reading from the N-terminus, the 331-residue chain is Junctional sarcoplasmic reticulum protein 1 (331 aa).

Disordered regions lie at residues 1–118 (MSMT…EELP) and 157–331 (RVPE…KGRD). The mediates interaction with CACNA1S stretch occupies residues 3–76 (MTTRAWEELD…EKEPAARGTP (74 aa)). 2 stretches are compositionally biased toward basic and acidic residues: residues 21-35 (LEDH…EDRA) and 61-71 (TRPKKMEKEPA). 2 stretches are compositionally biased toward pro residues: residues 103 to 112 (PLQPPPPPPA) and 161 to 175 (PWVP…PSSP). Composition is skewed to basic and acidic residues over residues 222 to 242 (AVRE…PRRE) and 250 to 302 (PRKE…EPRK). Basic residues predominate over residues 320–331 (SRQKLRAGKGRD).

Interacts with CACNA1S, CACNB1 and calsequestrin.

The protein resides in the sarcoplasmic reticulum membrane. It localises to the endoplasmic reticulum membrane. Functionally, involved in skeletal muscle excitation/contraction coupling (EC), probably acting as a regulator of the voltage-sensitive calcium channel CACNA1S. EC is a physiological process whereby an electrical signal (depolarization of the plasma membrane) is converted into a chemical signal, a calcium gradient, by the opening of ryanodine receptor calcium release channels. May regulate CACNA1S membrane targeting and activity. The polypeptide is Junctional sarcoplasmic reticulum protein 1 (JSRP1) (Homo sapiens (Human)).